The chain runs to 252 residues: NAP1-related protein 2 (252 aa).

Positions 1-15 (MTAPADKGKKAKTDA) are enriched in basic and acidic residues. Residues 1-23 (MTAPADKGKKAKTDADGGAAEEN) form a disordered region. A coiled-coil region spans residues 26–67 (IDGALVLSIEKLQEIQDELEKVNEEASDKVLEVEQKYSEIRR). The segment at 222–252 (YFNNEAEELGEDDDEEGSDADEGEEDEEEEN) is disordered. The segment covering 226–252 (EAEELGEDDDEEGSDADEGEEDEEEEN) has biased composition (acidic residues).

It belongs to the nucleosome assembly protein (NAP) family.

It is found in the nucleus. The protein resides in the cytoplasm. Functionally, acts as a histone H2A/H2B chaperone in nucleosome assembly. This chain is NAP1-related protein 2, found in Oryza sativa subsp. indica (Rice).